Reading from the N-terminus, the 248-residue chain is 4-hydroxy-tetrahydrodipicolinate reductase (248 aa).

Residues Gly9 to Val14, Gly77 to Thr79, and Ala104 to Phe107 each bind NAD(+). Residue His134 is the Proton donor/acceptor of the active site. His135 is a binding site for (S)-2,3,4,5-tetrahydrodipicolinate. Catalysis depends on Lys138, which acts as the Proton donor. Residue Gly144–Thr145 participates in (S)-2,3,4,5-tetrahydrodipicolinate binding.

The protein belongs to the DapB family.

The protein resides in the cytoplasm. The enzyme catalyses (S)-2,3,4,5-tetrahydrodipicolinate + NAD(+) + H2O = (2S,4S)-4-hydroxy-2,3,4,5-tetrahydrodipicolinate + NADH + H(+). It catalyses the reaction (S)-2,3,4,5-tetrahydrodipicolinate + NADP(+) + H2O = (2S,4S)-4-hydroxy-2,3,4,5-tetrahydrodipicolinate + NADPH + H(+). It participates in amino-acid biosynthesis; L-lysine biosynthesis via DAP pathway; (S)-tetrahydrodipicolinate from L-aspartate: step 4/4. In terms of biological role, catalyzes the conversion of 4-hydroxy-tetrahydrodipicolinate (HTPA) to tetrahydrodipicolinate. The protein is 4-hydroxy-tetrahydrodipicolinate reductase of Corynebacterium efficiens (strain DSM 44549 / YS-314 / AJ 12310 / JCM 11189 / NBRC 100395).